A 120-amino-acid polypeptide reads, in one-letter code: Large ribosomal subunit protein bL17 (120 aa).

Belongs to the bacterial ribosomal protein bL17 family. Part of the 50S ribosomal subunit. Contacts protein L32.

The polypeptide is Large ribosomal subunit protein bL17 (Mesomycoplasma hyopneumoniae (strain 7448) (Mycoplasma hyopneumoniae)).